A 147-amino-acid polypeptide reads, in one-letter code: Hemoglobin subunit beta (147 aa).

N-acetylvaline is present on valine 2. Residues 3–147 (HLTGDEKAAV…VANALAHKYH (145 aa)) enclose the Globin domain. Threonine 13 carries the phosphothreonine modification. Serine 45 is subject to Phosphoserine. Lysine 60 is modified (N6-acetyllysine). Histidine 64 contacts heme b. Lysine 83 carries the N6-acetyllysine modification. Position 93 (histidine 93) interacts with heme b. Cysteine 94 carries the post-translational modification S-nitrosocysteine. Lysine 145 is modified (N6-acetyllysine).

The protein belongs to the globin family. In terms of assembly, heterotetramer of two alpha chains and two beta chains. In terms of tissue distribution, red blood cells.

In terms of biological role, involved in oxygen transport from the lung to the various peripheral tissues. The protein is Hemoglobin subunit beta (HBB) of Saimiri sciureus (Common squirrel monkey).